Here is a 1406-residue protein sequence, read N- to C-terminus: DNA-directed RNA polymerase subunit beta' (1406 aa).

4 residues coordinate Zn(2+): Cys-70, Cys-72, Cys-85, and Cys-88. Mg(2+) is bound by residues Asp-460, Asp-462, and Asp-464. Zn(2+)-binding residues include Cys-814, Cys-888, Cys-895, and Cys-898.

It belongs to the RNA polymerase beta' chain family. In terms of assembly, the RNAP catalytic core consists of 2 alpha, 1 beta, 1 beta' and 1 omega subunit. When a sigma factor is associated with the core the holoenzyme is formed, which can initiate transcription. Mg(2+) is required as a cofactor. Requires Zn(2+) as cofactor.

It catalyses the reaction RNA(n) + a ribonucleoside 5'-triphosphate = RNA(n+1) + diphosphate. Its function is as follows. DNA-dependent RNA polymerase catalyzes the transcription of DNA into RNA using the four ribonucleoside triphosphates as substrates. The polypeptide is DNA-directed RNA polymerase subunit beta' (Sodalis glossinidius (strain morsitans)).